The primary structure comprises 129 residues: Small ribosomal subunit protein uS11 (129 aa).

This sequence belongs to the universal ribosomal protein uS11 family. In terms of assembly, part of the 30S ribosomal subunit. Interacts with proteins S7 and S18. Binds to IF-3.

Its function is as follows. Located on the platform of the 30S subunit, it bridges several disparate RNA helices of the 16S rRNA. Forms part of the Shine-Dalgarno cleft in the 70S ribosome. This is Small ribosomal subunit protein uS11 from Baumannia cicadellinicola subsp. Homalodisca coagulata.